Here is an 84-residue protein sequence, read N- to C-terminus: Kappa-scoloptoxin(11)-Ssm3a (84 aa).

The signal sequence occupies residues 1-16 (MSWMFYSFIVFTLAIK).

Belongs to the scoloptoxin-11 family. Contains 2 disulfide bonds. In terms of tissue distribution, expressed by the venom gland.

Its subcellular location is the secreted. Inhibits voltage-gated potassium channel currents in DRG neurons. 200 nM of the toxin inhibits current amplitude by only 25% and even at concentrations up to 5 uM, the toxin does not inhibit all potassium currents. In vivo, insects injected with this toxin showed signs of neurotoxicity including twitching, paralysis, and body contraction. The sequence is that of Kappa-scoloptoxin(11)-Ssm3a from Scolopendra mutilans (Chinese red-headed centipede).